Reading from the N-terminus, the 480-residue chain is Glutamate--tRNA ligase (480 aa).

Residues 8–18 (PSPTGPLHIGG) carry the 'HIGH' region motif. The 'KMSKS' region signature appears at 249–253 (KMSKR). Lysine 252 serves as a coordination point for ATP.

This sequence belongs to the class-I aminoacyl-tRNA synthetase family. Glutamate--tRNA ligase type 1 subfamily. Monomer.

It localises to the cytoplasm. The catalysed reaction is tRNA(Glu) + L-glutamate + ATP = L-glutamyl-tRNA(Glu) + AMP + diphosphate. In terms of biological role, catalyzes the attachment of glutamate to tRNA(Glu) in a two-step reaction: glutamate is first activated by ATP to form Glu-AMP and then transferred to the acceptor end of tRNA(Glu). The polypeptide is Glutamate--tRNA ligase (Carboxydothermus hydrogenoformans (strain ATCC BAA-161 / DSM 6008 / Z-2901)).